Consider the following 115-residue polypeptide: Toxin-like structure LSTX-D1 (115 aa).

The signal sequence occupies residues methionine 1–alanine 22. Residues isoleucine 23–arginine 44 constitute a propeptide that is removed on maturation. Intrachain disulfides connect cysteine 48/cysteine 63, cysteine 55/cysteine 72, cysteine 62/cysteine 87, and cysteine 74/cysteine 85.

The protein belongs to the neurotoxin 19 (CSTX) family. 01 subfamily. Expressed by the venom gland.

It is found in the secreted. The sequence is that of Toxin-like structure LSTX-D1 from Lycosa singoriensis (Wolf spider).